The chain runs to 300 residues: Matrix protein (300 aa).

A disordered region spans residues 1-36 (MHMFPLGVVEDSDPPGPPIGRASGSPPPGAGRSTAK).

In terms of assembly, homodimer. Dimerization is critical for virion formation. Interacts with host ANP32B.

The protein localises to the virion. It localises to the host cell membrane. In terms of biological role, the M protein has a crucial role in virus assembly and interacts with the RNP complex as well as with the viral membrane. Associates with phosphatidylserine (PS) and phosphatidylinositol 4,5-bisphosphate (PIP2) at the plasma membrane. Interaction with PIP2 triggers matrix protein lattice polymerization. Matrix proteins induce host membrane deformation and curvature necessary for virion assembly/budding. The chain is Matrix protein (M) from Measles virus (strain Yamagata-1) (MeV).